Reading from the N-terminus, the 577-residue chain is Arginine--tRNA ligase (577 aa).

A 'HIGH' region motif is present at residues 122-132 (PNVAKEMHVGH).

It belongs to the class-I aminoacyl-tRNA synthetase family. Monomer.

Its subcellular location is the cytoplasm. The catalysed reaction is tRNA(Arg) + L-arginine + ATP = L-arginyl-tRNA(Arg) + AMP + diphosphate. The protein is Arginine--tRNA ligase of Escherichia coli O9:H4 (strain HS).